Here is a 335-residue protein sequence, read N- to C-terminus: Nucleoid-associated protein YejK (335 aa).

Belongs to the YejK family.

Its subcellular location is the cytoplasm. It is found in the nucleoid. In Salmonella schwarzengrund (strain CVM19633), this protein is Nucleoid-associated protein YejK.